Reading from the N-terminus, the 38-residue chain is Photosystem II reaction center protein L (38 aa).

Residues serine 17 to phenylalanine 37 form a helical membrane-spanning segment.

This sequence belongs to the PsbL family. PSII is composed of 1 copy each of membrane proteins PsbA, PsbB, PsbC, PsbD, PsbE, PsbF, PsbH, PsbI, PsbJ, PsbK, PsbL, PsbM, PsbT, PsbX, PsbY, PsbZ, Psb30/Ycf12, at least 3 peripheral proteins of the oxygen-evolving complex and a large number of cofactors. It forms dimeric complexes.

It localises to the plastid. The protein resides in the chloroplast thylakoid membrane. One of the components of the core complex of photosystem II (PSII). PSII is a light-driven water:plastoquinone oxidoreductase that uses light energy to abstract electrons from H(2)O, generating O(2) and a proton gradient subsequently used for ATP formation. It consists of a core antenna complex that captures photons, and an electron transfer chain that converts photonic excitation into a charge separation. This subunit is found at the monomer-monomer interface and is required for correct PSII assembly and/or dimerization. This chain is Photosystem II reaction center protein L, found in Guillardia theta (Cryptophyte).